We begin with the raw amino-acid sequence, 393 residues long: MKIISLSISIGIAIIAVLASKTLFKTHPEAFGIKAISYSFKKSLCDHHHHHHHHHHHHHRHKPSDTKRKVSICDDFPKNIPPLDTDTTSYLCVDKNGCCNFTTVQSAVDAVGNFSQRRNVIWINSGMYYEKVVIPKTKPNITLQGQGFDITAIAWNDTAYSANGTFYCATVQVFGSQFVAKNISFMNVAPIPKPGDVGAQAVAIRIAGDESAFVGCGFFGAQDTLHDDRGRHYFKDCYIQGSIDFIFGNAKSLYQDCRIISMANQLSPGSKAVNGAVTANGRSSKDENSGFSFVNCTIGGTGHVWLGRAWRPYSRVVFVSTTMTDVIAPEGWNNFNDPSRDATIFYGEYNCSGPGADMSKRAPYVQKLNETQVALLINTSFIDGDQWLQFSDL.

The signal sequence occupies residues 1 to 19 (MKIISLSISIGIAIIAVLA). N-linked (GlcNAc...) asparagine glycans are attached at residues Asn100, Asn113, Asn140, Asn156, and Asn163. Thr165 is a binding site for substrate. Asn182 carries N-linked (GlcNAc...) asparagine glycosylation. Gln200 contacts substrate. Residue Asp223 is the Proton donor of the active site. The Nucleophile role is filled by Asp244. N-linked (GlcNAc...) asparagine glycosylation is present at Asn295. Arg308 lines the substrate pocket. N-linked (GlcNAc...) asparagine glycans are attached at residues Asn350, Asn369, and Asn378.

It belongs to the pectinesterase family. In terms of tissue distribution, expressed in siliques.

It localises to the secreted. Its subcellular location is the cell wall. The enzyme catalyses [(1-&gt;4)-alpha-D-galacturonosyl methyl ester](n) + n H2O = [(1-&gt;4)-alpha-D-galacturonosyl](n) + n methanol + n H(+). The protein operates within glycan metabolism; pectin degradation; 2-dehydro-3-deoxy-D-gluconate from pectin: step 1/5. Acts in the modification of cell walls via demethylesterification of cell wall pectin. This is Probable pectinesterase 8 (PME8) from Arabidopsis thaliana (Mouse-ear cress).